A 588-amino-acid polypeptide reads, in one-letter code: Protein cereblon (588 aa).

Disordered regions lie at residues 1–107 (MDDE…DDSD) and 159–197 (QERR…DIGF). Polar residues predominate over residues 41-50 (AWNNATQDEQ). Over residues 75–85 (MVEDVLQDDTA) the composition is skewed to acidic residues. Residues 86–96 (SEGSHPSSDMS) show a composition bias toward polar residues. A compositionally biased stretch (basic and acidic residues) spans 159–168 (QERRRSRTSE). A compositionally biased stretch (pro residues) spans 181–192 (NDPPPQQPPRPP). Positions 228 to 454 (HMLIFLHQHI…LIKSTFKDES (227 aa)) constitute a Lon N-terminal domain. In terms of domain architecture, CULT spans 453 to 562 (ESLFFCRYCN…LAGSSVRIGK (110 aa)). The Zn(2+) site is built by C458, C461, C527, and C530.

Belongs to the CRBN family. In terms of assembly, likely a component of a DCX (DDB1-CUL4-X-box) protein ligase complex. May interact with pic/DDB1. Ubiquitinated.

The protein localises to the nucleus. Its pathway is protein modification; protein ubiquitination. Functionally, substrate recognition component of a DCX (DDB1-CUL4-X-box) E3 protein ligase complex that mediates the ubiquitination and subsequent proteasomal degradation of target proteins. Has an essential role in mediating growth by negatively regulating insulin signaling. It also has a role in maintaining presynaptic function in the neuromuscular junction synapses of third-instar larvae. The protein is Protein cereblon of Drosophila yakuba (Fruit fly).